We begin with the raw amino-acid sequence, 1034 residues long: Glycine dehydrogenase (decarboxylating), mitochondrial (1034 aa).

Residues 1-63 (MERARRLAML…LNGFGSQVRT (63 aa)) constitute a mitochondrion transit peptide. At K770 the chain carries N6-(pyridoxal phosphate)lysine.

This sequence belongs to the GcvP family. As to quaternary structure, homodimer. The glycine cleavage system is composed of four proteins: P, T, L and H. It depends on pyridoxal 5'-phosphate as a cofactor.

The protein resides in the mitochondrion. The catalysed reaction is N(6)-[(R)-lipoyl]-L-lysyl-[glycine-cleavage complex H protein] + glycine + H(+) = N(6)-[(R)-S(8)-aminomethyldihydrolipoyl]-L-lysyl-[glycine-cleavage complex H protein] + CO2. In terms of biological role, the glycine cleavage system catalyzes the degradation of glycine. The P protein binds the alpha-amino group of glycine through its pyridoxal phosphate cofactor; CO(2) is released and the remaining methylamine moiety is then transferred to the lipoamide cofactor of the H protein. The protein is Glycine dehydrogenase (decarboxylating), mitochondrial (GDCSPA) of Flaveria trinervia (Clustered yellowtops).